Reading from the N-terminus, the 518-residue chain is Pumilio homolog 14 (518 aa).

Disordered stretches follow at residues 26 to 46 (TMAS…QPEN) and 77 to 114 (VGQN…PPMG). Positions 29–44 (SSSSQPQPISSPFHQP) are enriched in low complexity. The region spanning 178-518 (YTNRFGYEGY…GNKVLEKLNI (341 aa)) is the PUM-HD domain. The stretch at 206–235 (SAFAKDKEMSERLGMSIFQGTKETVDAIYN) is one Pumilio 1; degenerate repeat. 7 Pumilio repeats span residues 236–271 (GLIG…QLVD), 275–313 (QQMF…RIVD), 314–348 (VVRT…LLLE), 349–387 (LIVQ…RLIM), 388–423 (EAIA…ALVR), 424–459 (QLIG…IVID), and 460–494 (LLRE…MLRY).

Its subcellular location is the cytoplasm. It is found in the nucleus. In terms of biological role, sequence-specific RNA-binding protein that regulates translation and mRNA stability by binding the 3'-UTR of target mRNAs. This chain is Pumilio homolog 14 (APUM14), found in Arabidopsis thaliana (Mouse-ear cress).